The chain runs to 191 residues: Flagellar transcriptional regulator FlhC (191 aa).

Residues Cys139, Cys142, Cys159, and Cys162 each coordinate Zn(2+).

This sequence belongs to the FlhC family. Heterohexamer composed of two FlhC and four FlhD subunits. Each FlhC binds a FlhD dimer, forming a heterotrimer, and a hexamer assembles by dimerization of two heterotrimers. Zn(2+) serves as cofactor.

It is found in the cytoplasm. In terms of biological role, functions in complex with FlhD as a master transcriptional regulator that regulates transcription of several flagellar and non-flagellar operons by binding to their promoter region. Activates expression of class 2 flagellar genes, including fliA, which is a flagellum-specific sigma factor that turns on the class 3 genes. Also regulates genes whose products function in a variety of physiological pathways. This is Flagellar transcriptional regulator FlhC from Enterobacter cloacae subsp. cloacae (strain ATCC 13047 / DSM 30054 / NBRC 13535 / NCTC 10005 / WDCM 00083 / NCDC 279-56).